Consider the following 545-residue polypeptide: Calcium-dependent protein kinase 10 (545 aa).

Residues 1–36 (MGNCNACVRPDSKESKPSSKPKKPNRDRKLNPFAGD) form a disordered region. Gly2 carries the N-myristoyl glycine lipid modification. Residues 63–321 (YILGRELGRG…AQQVLAHPWI (259 aa)) enclose the Protein kinase domain. ATP is bound by residues 69-77 (LGRGEFGIT) and Lys92. The active-site Proton acceptor is the Asp187. Phosphoserine is present on Ser227. Residues 327 to 357 (APNVPLGDIVRSRLKQFSMMNRFKKKVLRVI) form an autoinhibitory domain region. EF-hand domains lie at 364-399 (QEVEVIKNMFSLMDDDKDGKITYPELKAGLQKVGSQ), 400-435 (LGEPEIKMLMEVADVDGNGFLDYGEFVAVIIHLQKI), 436-471 (ENDELFKLAFMFFDKDGSTYIELDELREALADELGE), and 472-507 (PDASVLSDIMREVDTDKDGRINYDEFVTMMKAGTDW). The Ca(2+) site is built by Asp377, Asp379, Asp381, Lys383, Glu388, Asp413, Asp415, Asn417, Glu424, Asp449, Asp451, Ser453, Tyr455, Glu460, Asp485, Asp487, Asp489, Arg491, and Glu496.

The protein belongs to the protein kinase superfamily. Ser/Thr protein kinase family. CDPK subfamily.

The protein resides in the membrane. The enzyme catalyses L-seryl-[protein] + ATP = O-phospho-L-seryl-[protein] + ADP + H(+). The catalysed reaction is L-threonyl-[protein] + ATP = O-phospho-L-threonyl-[protein] + ADP + H(+). With respect to regulation, activated by calcium. Autophosphorylation may play an important role in the regulation of the kinase activity. In terms of biological role, may play a role in signal transduction pathways that involve calcium as a second messenger. May be a positive regulator controlling stress signal transduction. The chain is Calcium-dependent protein kinase 10 (CPK10) from Arabidopsis thaliana (Mouse-ear cress).